Reading from the N-terminus, the 501-residue chain is Lysine--tRNA ligase (501 aa).

Residues E402 and E409 each contribute to the Mg(2+) site.

Belongs to the class-II aminoacyl-tRNA synthetase family. As to quaternary structure, homodimer. Requires Mg(2+) as cofactor.

It localises to the cytoplasm. The catalysed reaction is tRNA(Lys) + L-lysine + ATP = L-lysyl-tRNA(Lys) + AMP + diphosphate. This chain is Lysine--tRNA ligase, found in Helicobacter pylori (strain HPAG1).